The following is a 253-amino-acid chain: HTH-type transcriptional regulator YdeO (253 aa).

The region spanning 137 to 233 is the HTH araC/xylS-type domain; that stretch reads GKVRNIVNMK…GNSPKRVSKE (97 aa). 2 consecutive DNA-binding regions (H-T-H motif) follow at residues 154 to 175 and 200 to 223; these read KDIC…KQEQ and VNKI…RKHF.

Its function is as follows. Induces the expression of gadE and mdtEF. Could also regulate the expression of other genes involved in acid resistance. The chain is HTH-type transcriptional regulator YdeO (ydeO) from Escherichia coli (strain K12).